Reading from the N-terminus, the 223-residue chain is MKLHYVAVLTLAILMFLTWLPASLSCNKALCASDVSKCLIQELCQCRPGEGNCSCCKECMLCLEALWDECCDCVGMCNPRNYSDTPPTSKSTVEELHEPIPSLFRALTEGDTQLNWNIVSFPVAEELSHHENLVSFLETVNQPHHQNVSVPSNNVHAPYSSDKEHMCTVVYFDDCMSIHQCKISCESMGASKYRWFHNACCECIGPECIDYGSKTVKCMNCMF.

An N-terminal signal peptide occupies residues M1–S25. N52 and N81 each carry an N-linked (GlcNAc...) asparagine glycan.

This sequence belongs to the twisted gastrulation protein family. Interacts with CHRD and BMP4. This interaction enhances CHRD/BMP4 complex formation. Interacts with BMP7.

Its subcellular location is the secreted. Its function is as follows. May be involved in dorsoventral axis formation. Seems to antagonize BMP signaling by forming ternary complexes with CHRD and BMPs, thereby preventing BMPs from binding to their receptors. In addition to the anti-BMP function, also has pro-BMP activity, partly mediated by cleavage and degradation of CHRD, which releases BMPs from ternary complexes. May be an important modulator of BMP-regulated cartilage development and chondrocyte differentiation. May play a role in thymocyte development. The polypeptide is Twisted gastrulation protein homolog 1 (TWSG1) (Pongo abelii (Sumatran orangutan)).